A 187-amino-acid polypeptide reads, in one-letter code: Calcium and integrin-binding family member 2 (187 aa).

3 consecutive EF-hand domains span residues 66-101 (RENP…LCES), 103-138 (PREL…LTKS), and 144-179 (EVVL…APDF). 9 residues coordinate Ca(2+): Asp-116, Asn-118, Asp-120, Asp-127, Asp-157, Asp-159, Asp-161, Lys-163, and Asp-168.

Monomer. Homodimer. Interacts with WHRN and MYO7A. Interacts with ITGA2B (via C-terminus cytoplasmic tail region); the interactions are stabilized/increased in a calcium and magnesium-dependent manner. Interacts with ITGA7 (via C-terminus cytoplasmic tail region); the interactions are stabilized/increased in a calcium and magnesium-dependent manner. Interacts with TMC1. Interacts with TMC2.

It localises to the cytoplasm. Its subcellular location is the cell projection. It is found in the stereocilium. The protein resides in the photoreceptor inner segment. The protein localises to the cilium. It localises to the photoreceptor outer segment. Its subcellular location is the cell membrane. It is found in the sarcolemma. In terms of biological role, calcium- and integrin-binding protein that plays a role in intracellular calcium homeostasis. Acts as an auxiliary subunit of the sensory mechanoelectrical transduction (MET) channel in hair cells. Essential for mechanoelectrical transduction (MET) currents in auditory hair cells and thereby required for hearing. Regulates the function of hair cell mechanotransduction by controlling the distribution of transmembrane channel-like proteins TMC1 and TMC2, and by regulating the function of the MET channels in hair cells. Required for the maintenance of auditory hair cell stereocilia bundle morphology and function and for hair-cell survival in the cochlea. Critical for proper photoreceptor cell maintenance and function. Plays a role in intracellular calcium homeostasis by decreasing ATP-induced calcium release. The polypeptide is Calcium and integrin-binding family member 2 (Cib2) (Rattus norvegicus (Rat)).